The primary structure comprises 54 residues: ATP synthase F(0) complex subunit 8 (54 aa).

Residues 9-29 (WFMILFFSWVIFLTIIPTKII) traverse the membrane as a helical segment. The tract at residues 35–54 (NDPTQVDAKEHKNDTWNWPW) is disordered.

The protein belongs to the ATPase protein 8 family. In terms of assembly, component of the ATP synthase complex composed at least of ATP5F1A/subunit alpha, ATP5F1B/subunit beta, ATP5MC1/subunit c (homooctomer), MT-ATP6/subunit a, MT-ATP8/subunit 8, ATP5ME/subunit e, ATP5MF/subunit f, ATP5MG/subunit g, ATP5MK/subunit k, ATP5MJ/subunit j, ATP5F1C/subunit gamma, ATP5F1D/subunit delta, ATP5F1E/subunit epsilon, ATP5PF/subunit F6, ATP5PB/subunit b, ATP5PD/subunit d, ATP5PO/subunit OSCP. ATP synthase complex consists of a soluble F(1) head domain (subunits alpha(3) and beta(3)) - the catalytic core - and a membrane F(0) domain - the membrane proton channel (subunits c, a, 8, e, f, g, k and j). These two domains are linked by a central stalk (subunits gamma, delta, and epsilon) rotating inside the F1 region and a stationary peripheral stalk (subunits F6, b, d, and OSCP).

Its subcellular location is the mitochondrion membrane. Its function is as follows. Subunit 8, of the mitochondrial membrane ATP synthase complex (F(1)F(0) ATP synthase or Complex V) that produces ATP from ADP in the presence of a proton gradient across the membrane which is generated by electron transport complexes of the respiratory chain. ATP synthase complex consist of a soluble F(1) head domain - the catalytic core - and a membrane F(1) domain - the membrane proton channel. These two domains are linked by a central stalk rotating inside the F(1) region and a stationary peripheral stalk. During catalysis, ATP synthesis in the catalytic domain of F(1) is coupled via a rotary mechanism of the central stalk subunits to proton translocation. In vivo, can only synthesize ATP although its ATP hydrolase activity can be activated artificially in vitro. Part of the complex F(0) domain. The chain is ATP synthase F(0) complex subunit 8 from Danio rerio (Zebrafish).